Consider the following 994-residue polypeptide: Bifunctional glutamine synthetase adenylyltransferase/adenylyl-removing enzyme (994 aa).

The adenylyl removase stretch occupies residues 1-487 (MVVTKLATQR…LHTKLFYQPL (487 aa)). Residues 492 to 994 (GPTGLEIAHG…KAVVRKVFGS (503 aa)) form an adenylyl transferase region.

This sequence belongs to the GlnE family. Mg(2+) is required as a cofactor.

The enzyme catalyses [glutamine synthetase]-O(4)-(5'-adenylyl)-L-tyrosine + phosphate = [glutamine synthetase]-L-tyrosine + ADP. It catalyses the reaction [glutamine synthetase]-L-tyrosine + ATP = [glutamine synthetase]-O(4)-(5'-adenylyl)-L-tyrosine + diphosphate. In terms of biological role, involved in the regulation of glutamine synthetase GlnA, a key enzyme in the process to assimilate ammonia. When cellular nitrogen levels are high, the C-terminal adenylyl transferase (AT) inactivates GlnA by covalent transfer of an adenylyl group from ATP to specific tyrosine residue of GlnA, thus reducing its activity. Conversely, when nitrogen levels are low, the N-terminal adenylyl removase (AR) activates GlnA by removing the adenylyl group by phosphorolysis, increasing its activity. The regulatory region of GlnE binds the signal transduction protein PII (GlnB) which indicates the nitrogen status of the cell. The sequence is that of Bifunctional glutamine synthetase adenylyltransferase/adenylyl-removing enzyme from Mycobacterium bovis (strain ATCC BAA-935 / AF2122/97).